The chain runs to 176 residues: Large ribosomal subunit protein uL10 (176 aa).

The protein belongs to the universal ribosomal protein uL10 family. Part of the ribosomal stalk of the 50S ribosomal subunit. The N-terminus interacts with L11 and the large rRNA to form the base of the stalk. The C-terminus forms an elongated spine to which L12 dimers bind in a sequential fashion forming a multimeric L10(L12)X complex.

In terms of biological role, forms part of the ribosomal stalk, playing a central role in the interaction of the ribosome with GTP-bound translation factors. This is Large ribosomal subunit protein uL10 from Dehalococcoides mccartyi (strain ATCC BAA-2100 / JCM 16839 / KCTC 5957 / BAV1).